Reading from the N-terminus, the 310-residue chain is Membrane protein insertase YidC 2 (310 aa).

The first 23 residues, 1-23 (MKKIYKRLLFSGLALSMLFFLSG), serve as a signal peptide directing secretion. A lipid anchor (N-palmitoyl cysteine) is attached at cysteine 24. Cysteine 24 is lipidated: S-diacylglycerol cysteine. The next 5 helical transmembrane spans lie at 34–54 (GEGW…QYLA), 57–77 (LGLG…LLIL), 136–156 (FGGL…ALYI), 180–200 (IITV…TLSV), and 220–240 (VMIS…SGIF). The segment at 263 to 310 (EFKKNPPKPFKSNARKDITPQANNDKKLITSKKQKSNRNAGKQRHHKQ) is disordered. The span at 276–290 (ARKDITPQANNDKKL) shows a compositional bias: basic and acidic residues. The segment covering 291 to 310 (ITSKKQKSNRNAGKQRHHKQ) has biased composition (basic residues).

This sequence belongs to the OXA1/ALB3/YidC family. Type 2 subfamily.

It is found in the cell membrane. In terms of biological role, required for the insertion and/or proper folding and/or complex formation of integral membrane proteins into the membrane. Involved in integration of membrane proteins that insert both dependently and independently of the Sec translocase complex, as well as at least some lipoproteins. Partially complements an E.coli yidC depletion experiment. In Streptococcus mutans serotype c (strain ATCC 700610 / UA159), this protein is Membrane protein insertase YidC 2 (yidC2).